The primary structure comprises 293 residues: Nucleotide-binding protein OB2468 (293 aa).

G14 to T21 serves as a coordination point for ATP. D65 to G68 is a binding site for GTP.

Belongs to the RapZ-like family.

Displays ATPase and GTPase activities. The chain is Nucleotide-binding protein OB2468 from Oceanobacillus iheyensis (strain DSM 14371 / CIP 107618 / JCM 11309 / KCTC 3954 / HTE831).